The primary structure comprises 470 residues: Glutamate--tRNA ligase (470 aa).

The short motif at 9-19 is the 'HIGH' region element; sequence PSPTGYLHVGG. A 'KMSKS' region motif is present at residues 236 to 240; the sequence is RLSKR. Lys239 serves as a coordination point for ATP.

This sequence belongs to the class-I aminoacyl-tRNA synthetase family. Glutamate--tRNA ligase type 1 subfamily. In terms of assembly, monomer.

The protein resides in the cytoplasm. It catalyses the reaction tRNA(Glu) + L-glutamate + ATP = L-glutamyl-tRNA(Glu) + AMP + diphosphate. Functionally, catalyzes the attachment of glutamate to tRNA(Glu) in a two-step reaction: glutamate is first activated by ATP to form Glu-AMP and then transferred to the acceptor end of tRNA(Glu). In Colwellia psychrerythraea (strain 34H / ATCC BAA-681) (Vibrio psychroerythus), this protein is Glutamate--tRNA ligase.